Reading from the N-terminus, the 471-residue chain is 3-isopropylmalate dehydratase large subunit (471 aa).

[4Fe-4S] cluster-binding residues include Cys349, Cys410, and Cys413.

It belongs to the aconitase/IPM isomerase family. LeuC type 1 subfamily. In terms of assembly, heterodimer of LeuC and LeuD. The cofactor is [4Fe-4S] cluster.

The enzyme catalyses (2R,3S)-3-isopropylmalate = (2S)-2-isopropylmalate. Its pathway is amino-acid biosynthesis; L-leucine biosynthesis; L-leucine from 3-methyl-2-oxobutanoate: step 2/4. In terms of biological role, catalyzes the isomerization between 2-isopropylmalate and 3-isopropylmalate, via the formation of 2-isopropylmaleate. The polypeptide is 3-isopropylmalate dehydratase large subunit (Chromobacterium violaceum (strain ATCC 12472 / DSM 30191 / JCM 1249 / CCUG 213 / NBRC 12614 / NCIMB 9131 / NCTC 9757 / MK)).